A 445-amino-acid polypeptide reads, in one-letter code: uncharacterized protein (445 aa).

8 helical membrane-spanning segments follow: residues 16–36, 52–72, 98–118, 168–188, 219–239, 243–263, 283–303, and 366–386; these read IVSL…AFLI, LLAS…GYLL, VHSL…AGGC, GLMF…LGIV, ASAL…VWLI, GWSV…GALG, LIAA…NEGS, and AAYP…VPLV. The disordered stretch occupies residues 417–445; sequence AWPNGPRRPGPPGQPRRVRQGGTAITPPT.

Belongs to the major facilitator superfamily.

It localises to the cell membrane. This is an uncharacterized protein from Mycobacterium tuberculosis (strain CDC 1551 / Oshkosh).